Reading from the N-terminus, the 60-residue chain is Metallothionein (60 aa).

A beta region spans residues 1–28 (MDCACATGGSCSCAGSCKCENCKCTSCK). A divalent metal cation is bound by residues Cys3, Cys5, Cys11, Cys13, Cys17, Cys19, Cys22, Cys24, Cys27, Cys31, Cys32, Cys34, Cys35, Cys39, Cys42, Cys46, Cys48, Cys56, Cys58, and Cys59. The alpha stretch occupies residues 29–60 (KSCCSCCPSECEKCGQGCVCKGGSSEKCSCCN).

Belongs to the metallothionein superfamily. Type 1 family.

Functionally, metallothioneins have a high content of cysteine residues that bind various heavy metals. The protein is Metallothionein (MT-A) of Ambystoma mexicanum (Axolotl).